Consider the following 160-residue polypeptide: Transcriptional repressor NrdR (160 aa).

The segment at 3-34 (CPRCHHNNSRVIDSRQADDGRAIRRRRECENC) is a zinc-finger region. An ATP-cone domain is found at 49-139 (LLVIKKNGDR…VYRQFKDMSV (91 aa)).

Belongs to the NrdR family. The cofactor is Zn(2+).

Negatively regulates transcription of bacterial ribonucleotide reductase nrd genes and operons by binding to NrdR-boxes. The protein is Transcriptional repressor NrdR of Enterococcus faecalis (strain ATCC 700802 / V583).